A 467-amino-acid chain; its full sequence is MNEIDKTPRQIVAELDKYVIGQDSAKRAIAVALRNRYRRIQLPKDMQEDISPKNLLMIGPTGVGKTEIARRLAKIVNAPFVKVEATKFTEVGYVGRDVESMARDLVEVAYRMEQNDAFKQVRAQAAQQANKRLVKLIVPAKKKQENPNQYLFNALRDLQSGSFPNMNGNDMEEVTEDVRNERLSVAEQLKRGLLENNEVTIQVDDPSTQFNNQSGMLGQMGIDLSSLSSMMPTKKVERTMTVAEAREILIKEESEKLVNSADLADAAIKRAENTGIIFIDEIDKIASKSQQNAGQVSREGVQRDILPIVEGSQISTKYGLVKTDHILFIGSGAFHESKPSDLIAELQGRFPIRVELEDLSVDDFVKILTEPNNALVKQYIAMIGTDNIDVTFTIEAIHRIAEVAYQLNHDTENIGARRLHTILEKLLEDLLFEGPDMQMGDIKITEAYVNDKIGSIVEDKDLSQYIL.

ATP contacts are provided by residues isoleucine 20, 62–67, aspartate 280, glutamate 345, and arginine 417; that span reads GVGKTE.

This sequence belongs to the ClpX chaperone family. HslU subfamily. In terms of assembly, a double ring-shaped homohexamer of HslV is capped on each side by a ring-shaped HslU homohexamer. The assembly of the HslU/HslV complex is dependent on binding of ATP.

It localises to the cytoplasm. In terms of biological role, ATPase subunit of a proteasome-like degradation complex; this subunit has chaperone activity. The binding of ATP and its subsequent hydrolysis by HslU are essential for unfolding of protein substrates subsequently hydrolyzed by HslV. HslU recognizes the N-terminal part of its protein substrates and unfolds these before they are guided to HslV for hydrolysis. In Ligilactobacillus salivarius (strain UCC118) (Lactobacillus salivarius), this protein is ATP-dependent protease ATPase subunit HslU.